Reading from the N-terminus, the 704-residue chain is Elongation factor G (704 aa).

A tr-type G domain is found at Asn-10–Leu-290. GTP contacts are provided by residues Ala-19–Thr-26, Asp-83–His-87, and Asn-137–Asp-140. The segment at Pro-293–Thr-313 is disordered. Basic and acidic residues predominate over residues His-298 to Thr-313.

It belongs to the TRAFAC class translation factor GTPase superfamily. Classic translation factor GTPase family. EF-G/EF-2 subfamily.

It is found in the cytoplasm. Functionally, catalyzes the GTP-dependent ribosomal translocation step during translation elongation. During this step, the ribosome changes from the pre-translocational (PRE) to the post-translocational (POST) state as the newly formed A-site-bound peptidyl-tRNA and P-site-bound deacylated tRNA move to the P and E sites, respectively. Catalyzes the coordinated movement of the two tRNA molecules, the mRNA and conformational changes in the ribosome. In Renibacterium salmoninarum (strain ATCC 33209 / DSM 20767 / JCM 11484 / NBRC 15589 / NCIMB 2235), this protein is Elongation factor G.